Here is a 588-residue protein sequence, read N- to C-terminus: Transport ATP-binding protein AarD (588 aa).

An ABC transmembrane type-1 domain is found at 24–316 (LRISMLLGVV…LGTYYHAKAQ (293 aa)). The next 6 membrane-spanning stretches (helical) occupy residues 29–49 (LLGV…AVIL), 62–82 (LLTP…LTVI), 149–169 (IIPI…ALIL), 170–190 (FATA…AADA), 250–270 (SGVL…YFGF), and 276–296 (LNFG…ALIL). The ABC transporter domain occupies 350–583 (IEANKLEIYS…EGPFARLLAH (234 aa)). 383-390 (GQSGAGKS) provides a ligand contact to ATP.

Belongs to the ABC transporter superfamily.

The protein resides in the cell inner membrane. In terms of biological role, somehow involved in the cytochrome D branch of aerobic respiration. Seems to be a component of a transport system. In Providencia stuartii, this protein is Transport ATP-binding protein AarD (aarD).